A 477-amino-acid polypeptide reads, in one-letter code: Bifunctional protein HldE (477 aa).

Positions 1 to 318 are ribokinase; sequence MKVTLPEFER…ENAVRGRADT (318 aa). K179 bears the N6-acetyllysine mark. 195-198 is an ATP binding site; the sequence is NLSE. The active site involves D264. A cytidylyltransferase region spans residues 344-477; that stretch reads MTNGVFDILH…IKKIQQDKKG (134 aa).

In the N-terminal section; belongs to the carbohydrate kinase PfkB family. The protein in the C-terminal section; belongs to the cytidylyltransferase family. As to quaternary structure, homodimer.

The catalysed reaction is D-glycero-beta-D-manno-heptose 7-phosphate + ATP = D-glycero-beta-D-manno-heptose 1,7-bisphosphate + ADP + H(+). It catalyses the reaction D-glycero-beta-D-manno-heptose 1-phosphate + ATP + H(+) = ADP-D-glycero-beta-D-manno-heptose + diphosphate. It functions in the pathway nucleotide-sugar biosynthesis; ADP-L-glycero-beta-D-manno-heptose biosynthesis; ADP-L-glycero-beta-D-manno-heptose from D-glycero-beta-D-manno-heptose 7-phosphate: step 1/4. The protein operates within nucleotide-sugar biosynthesis; ADP-L-glycero-beta-D-manno-heptose biosynthesis; ADP-L-glycero-beta-D-manno-heptose from D-glycero-beta-D-manno-heptose 7-phosphate: step 3/4. Catalyzes the phosphorylation of D-glycero-D-manno-heptose 7-phosphate at the C-1 position to selectively form D-glycero-beta-D-manno-heptose-1,7-bisphosphate. Its function is as follows. Catalyzes the ADP transfer from ATP to D-glycero-beta-D-manno-heptose 1-phosphate, yielding ADP-D-glycero-beta-D-manno-heptose. The polypeptide is Bifunctional protein HldE (Shigella flexneri serotype 5b (strain 8401)).